A 261-amino-acid polypeptide reads, in one-letter code: Probable pectin methylesterase CGR2 (261 aa).

The Cytoplasmic portion of the chain corresponds to 1-35; the sequence is MARRQVGSTRRVGDGGSFPFAGALHSKSRSSPLLS. A helical membrane pass occupies residues 36 to 56; that stretch reads ICLVLVGACLLIGYAYSGPGI. Over 57–261 the chain is Lumenal; it reads FKSIKEVSKV…CQVFHLKPLH (205 aa). Asn-174 carries N-linked (GlcNAc...) asparagine glycosylation.

The protein belongs to the class I-like SAM-binding methyltransferase superfamily.

It localises to the golgi apparatus membrane. Functionally, together with CGR3, required for homogalacturonan pectins (HG) methylesterification in the Golgi apparatus prior to integration into cell walls, essential for general growth and development. Promotes rosette growth. Impacts carbon (C) partitioning, photosynthesis and respiration efficiency by influencing leaf mesophyll cell walls morphology and physiology; pectin methylesterification modulates both expansion and positioning of cells in leaves, probably by changing cell walls plasticity. This is Probable pectin methylesterase CGR2 from Arabidopsis thaliana (Mouse-ear cress).